The chain runs to 299 residues: Inosose dehydratase (299 aa).

This sequence belongs to the IolE/MocC family. Glutathione serves as cofactor. It depends on Co(2+) as a cofactor. Mn(2+) is required as a cofactor.

The enzyme catalyses scyllo-inosose = 3D-3,5/4-trihydroxycyclohexane-1,2-dione + H2O. Its function is as follows. Catalyzes the dehydration of inosose (2-keto-myo-inositol, 2KMI or 2,4,6/3,5-pentahydroxycyclohexanone) to 3D-(3,5/4)-trihydroxycyclohexane-1,2-dione (D-2,3-diketo-4-deoxy-epi-inositol). The polypeptide is Inosose dehydratase (Klebsiella pneumoniae (strain 342)).